Consider the following 488-residue polypeptide: Dihydrolipoyl dehydrogenase, mitochondrial (488 aa).

Residues 1–25 constitute a mitochondrion transit peptide; it reads MLRINRISNLRTFGQRFFSTEQQDV. Residues 52-61, Lys-70, Gly-134, and 163-165 each bind FAD; these read EKRGKLGGTC and TGS. Cys-61 and Cys-66 are disulfide-bonded. NAD(+) contacts are provided by residues 200 to 207, Glu-223, Val-257, and Gly-294; that span reads GGGVIGLE. Residues Asp-335 and 341 to 344 each bind FAD; that span reads MLAH. The active-site Proton acceptor is the His-467.

It belongs to the class-I pyridine nucleotide-disulfide oxidoreductase family. It depends on FAD as a cofactor.

It is found in the mitochondrion matrix. It carries out the reaction N(6)-[(R)-dihydrolipoyl]-L-lysyl-[protein] + NAD(+) = N(6)-[(R)-lipoyl]-L-lysyl-[protein] + NADH + H(+). The polypeptide is Dihydrolipoyl dehydrogenase, mitochondrial (lpd) (Dictyostelium discoideum (Social amoeba)).